The primary structure comprises 212 residues: MNLSIAELRKSYGRAELNEDAAHADPLQQFDQWLGQAIAAQLPEPNAMTLATVGSDLRPSTRIVLIKGYDERGIVWFTNYDSRKGRQIAGNPCAALQFHWVELERVVRIEGLVQKVSDQESDAYFDSRPLDSRIGAWASPQSQVIAGRGVLLANAARYGAQFMLKPPRPQHWGGYRLEPDLWEFWQGRKSRLHDRLRYRMAGGQWVRERLAP.

Residues 9 to 12 (RKSY) and Lys67 each bind substrate. FMN-binding positions include 62-67 (RIVLIK), 77-78 (FT), Arg83, and Lys84. Tyr124, Arg128, and Ser132 together coordinate substrate. FMN contacts are provided by residues 141–142 (QS) and Trp185. 191 to 193 (RLH) serves as a coordination point for substrate. Arg195 lines the FMN pocket.

This sequence belongs to the pyridoxamine 5'-phosphate oxidase family. Homodimer. FMN serves as cofactor.

The catalysed reaction is pyridoxamine 5'-phosphate + O2 + H2O = pyridoxal 5'-phosphate + H2O2 + NH4(+). The enzyme catalyses pyridoxine 5'-phosphate + O2 = pyridoxal 5'-phosphate + H2O2. It participates in cofactor metabolism; pyridoxal 5'-phosphate salvage; pyridoxal 5'-phosphate from pyridoxamine 5'-phosphate: step 1/1. Its pathway is cofactor metabolism; pyridoxal 5'-phosphate salvage; pyridoxal 5'-phosphate from pyridoxine 5'-phosphate: step 1/1. Its function is as follows. Catalyzes the oxidation of either pyridoxine 5'-phosphate (PNP) or pyridoxamine 5'-phosphate (PMP) into pyridoxal 5'-phosphate (PLP). This chain is Pyridoxine/pyridoxamine 5'-phosphate oxidase, found in Verminephrobacter eiseniae (strain EF01-2).